The following is a 166-amino-acid chain: Ribosome maturation factor RimM (166 aa).

Positions 90 to 165 (NDNDAFSIFY…IITLKNIEGL (76 aa)) constitute a PRC barrel domain.

This sequence belongs to the RimM family. Binds ribosomal protein uS19.

The protein resides in the cytoplasm. Functionally, an accessory protein needed during the final step in the assembly of 30S ribosomal subunit, possibly for assembly of the head region. Essential for efficient processing of 16S rRNA. May be needed both before and after RbfA during the maturation of 16S rRNA. It has affinity for free ribosomal 30S subunits but not for 70S ribosomes. The protein is Ribosome maturation factor RimM of Mesoplasma florum (strain ATCC 33453 / NBRC 100688 / NCTC 11704 / L1) (Acholeplasma florum).